Consider the following 73-residue polypeptide: Large ribosomal subunit protein bL31 (73 aa).

4 residues coordinate Zn(2+): Cys16, Cys18, Cys37, and Cys40.

The protein belongs to the bacterial ribosomal protein bL31 family. Type A subfamily. As to quaternary structure, part of the 50S ribosomal subunit. Requires Zn(2+) as cofactor.

Its function is as follows. Binds the 23S rRNA. This is Large ribosomal subunit protein bL31 from Hamiltonella defensa subsp. Acyrthosiphon pisum (strain 5AT).